An 83-amino-acid polypeptide reads, in one-letter code: Short neurotoxin VAN-10 (83 aa).

Positions 1-21 (MKTLLLTLVVVTIVCLDLGYT) are cleaved as a signal peptide. Cystine bridges form between Cys-24/Cys-45, Cys-38/Cys-62, Cys-64/Cys-75, and Cys-76/Cys-81.

This sequence belongs to the three-finger toxin family. Short-chain subfamily. Type I alpha-neurotoxin sub-subfamily. In terms of tissue distribution, expressed by the venom gland.

The protein resides in the secreted. In terms of biological role, binds to muscle nicotinic acetylcholine receptor (nAChR) and inhibit acetylcholine from binding to the receptor, thereby impairing neuromuscular transmission. In Laticauda laticaudata (Blue-ringed sea krait), this protein is Short neurotoxin VAN-10.